The chain runs to 1362 residues: DNA-directed RNA polymerase subunit beta (1362 aa).

The protein belongs to the RNA polymerase beta chain family. In terms of assembly, the RNAP catalytic core consists of 2 alpha, 1 beta, 1 beta' and 1 omega subunit. When a sigma factor is associated with the core the holoenzyme is formed, which can initiate transcription.

It carries out the reaction RNA(n) + a ribonucleoside 5'-triphosphate = RNA(n+1) + diphosphate. In terms of biological role, DNA-dependent RNA polymerase catalyzes the transcription of DNA into RNA using the four ribonucleoside triphosphates as substrates. In Parvibaculum lavamentivorans (strain DS-1 / DSM 13023 / NCIMB 13966), this protein is DNA-directed RNA polymerase subunit beta.